Here is a 320-residue protein sequence, read N- to C-terminus: MHRTTRIKITELNPHLMCVLCGGYFIDATTIIECLHSFCKMCIVRYLETSKYCPICDVQVHKTKPLLNIRSDKTLQDIVYKLVPGLFKNEMKRRRDFYAEHPSVDAANGSNEDRGEVADEDKRIITDDEIISLSIEFFDHRAQQQGCTEERQKEEVNNKRYLQCPAAMTVMHLRKFLRSKMDIPPTYQIEVMYEDEPLKDYYTLMDIAYIYTWRRNGPLPLKYRVRPSCKKMKITHPQEGLNNANRSESDSASDKACSPAGVPSTSSPLPSPSTLVQPSQPHFTHISSPINGTTMTSPNRQFNFSKVRKSALNGSSTSSG.

The RING-type zinc finger occupies 18–57 (CVLCGGYFIDATTIIECLHSFCKMCIVRYLETSKYCPICD). The Nuclear localization signal motif lies at 81–95 (KLVPGLFKNEMKRRR). Positions 234–320 (ITHPQEGLNN…ALNGSSTSSG (87 aa)) are disordered. Low complexity predominate over residues 262–281 (VPSTSSPLPSPSTLVQPSQP). A compositionally biased stretch (polar residues) spans 285–304 (HISSPINGTTMTSPNRQFNF).

As to quaternary structure, component of a PRC1-like complex. Homodimer. Interacts with cbx2.

The protein localises to the nucleus. Its function is as follows. Component of a Polycomb group (PcG) multiprotein PRC1-like complex, a complex class required to maintain the transcriptionally repressive state of many genes, including Hox genes, throughout development. PcG PRC1 complex acts via chromatin remodeling and modification of histones; it mediates monoubiquitination of histone H2A 'Lys-119', rendering chromatin heritably changed in its expressibility. In the PRC1 complex, it is required to stimulate the E3 ubiquitin-protein ligase activity of rnf2. The protein is Polycomb complex protein BMI-1-A (bmi1a) of Danio rerio (Zebrafish).